The chain runs to 152 residues: NADH-quinone oxidoreductase subunit I 1 (152 aa).

2 4Fe-4S ferredoxin-type domains span residues 53 to 83 and 94 to 123; these read MKLGENGETLCIGCNLCALACPENLIAMKSD and VTYVYDVSRCMFCGLCEEACPTQSLKLGTG. Positions 63, 66, 69, 73, 103, 106, 109, and 113 each coordinate [4Fe-4S] cluster.

This sequence belongs to the complex I 23 kDa subunit family. In terms of assembly, NDH-1 is composed of 14 different subunits. Subunits NuoA, H, J, K, L, M, N constitute the membrane sector of the complex. Requires [4Fe-4S] cluster as cofactor.

It is found in the cell inner membrane. It carries out the reaction a quinone + NADH + 5 H(+)(in) = a quinol + NAD(+) + 4 H(+)(out). Its function is as follows. NDH-1 shuttles electrons from NADH, via FMN and iron-sulfur (Fe-S) centers, to quinones in the respiratory chain. The immediate electron acceptor for the enzyme in this species is believed to be ubiquinone. Couples the redox reaction to proton translocation (for every two electrons transferred, four hydrogen ions are translocated across the cytoplasmic membrane), and thus conserves the redox energy in a proton gradient. The protein is NADH-quinone oxidoreductase subunit I 1 of Koribacter versatilis (strain Ellin345).